The primary structure comprises 170 residues: Myelin-associated oligodendrocyte basic protein (170 aa).

Residues 69–170 (SRRATSPQRP…GSPTRAPRFW (102 aa)) are disordered. Positions 82-92 (PAASPVVVRAP) are enriched in low complexity. Residues serine 85, serine 98, and serine 107 each carry the phosphoserine modification. Tandem repeats lie at residues 93 to 101 (PAKPKSPLM) and 105 to 110 (PRSPPR). Residues 93-115 (PAKPKSPLMPAKPRSPPRPAKPR) form a 3 X 9 AA approximate tandem repeats region. The stretch at 111–115 (PAKPR) is one 3; half-length repeat. Positions 118–130 (SRTERQPRPRPEV) are enriched in basic and acidic residues. A compositionally biased stretch (low complexity) spans 138–151 (KPPQKSKQPARSSP).

The protein localises to the cytoplasm. The protein resides in the perinuclear region. May play a role in compacting or stabilizing the myelin sheath possibly by binding the negatively charged acidic phospholipids of the cytoplasmic membrane. The polypeptide is Myelin-associated oligodendrocyte basic protein (Mobp) (Mus musculus (Mouse)).